The following is an 864-amino-acid chain: Leucine--tRNA ligase (864 aa).

A 'HIGH' region motif is present at residues 42–52; that stretch reads PYPSGKLHMGH. The 'KMSKS' region signature appears at 624–628; it reads KMSKS. K627 is a binding site for ATP.

It belongs to the class-I aminoacyl-tRNA synthetase family.

It is found in the cytoplasm. It carries out the reaction tRNA(Leu) + L-leucine + ATP = L-leucyl-tRNA(Leu) + AMP + diphosphate. This Burkholderia pseudomallei (strain 1106a) protein is Leucine--tRNA ligase.